We begin with the raw amino-acid sequence, 180 residues long: ATP-dependent protease subunit HslV (180 aa).

Thr-5 is an active-site residue. Residues Gly-165, Cys-168, and Thr-171 each contribute to the Na(+) site.

The protein belongs to the peptidase T1B family. HslV subfamily. In terms of assembly, a double ring-shaped homohexamer of HslV is capped on each side by a ring-shaped HslU homohexamer. The assembly of the HslU/HslV complex is dependent on binding of ATP.

The protein resides in the cytoplasm. It catalyses the reaction ATP-dependent cleavage of peptide bonds with broad specificity.. With respect to regulation, allosterically activated by HslU binding. Its function is as follows. Protease subunit of a proteasome-like degradation complex believed to be a general protein degrading machinery. The polypeptide is ATP-dependent protease subunit HslV (Helicobacter pylori (strain J99 / ATCC 700824) (Campylobacter pylori J99)).